Reading from the N-terminus, the 396-residue chain is Inositol-tetrakisphosphate 1-kinase (396 aa).

Lysine 18 contacts 1D-myo-inositol 1,3,4-trisphosphate. Positions 106 and 157 each coordinate ATP. One can recognise an ATP-grasp domain in the interval 117–325; the sequence is ETYMQDERIC…ITTILQRPDQ (209 aa). 1D-myo-inositol 1,3,4-trisphosphate contacts are provided by histidine 167 and lysine 199. Residues 188–199, serine 214, serine 232, and serine 236 each bind ATP; that span reads QSFISHNAVLYK. Mg(2+) contacts are provided by aspartate 281, aspartate 295, and asparagine 297. A 1D-myo-inositol 1,3,4-trisphosphate-binding site is contributed by asparagine 297.

It belongs to the ITPK1 family. Monomer. The cofactor is Mg(2+).

It carries out the reaction 1D-myo-inositol 3,4,5,6-tetrakisphosphate + ATP = 1D-myo-inositol 1,3,4,5,6-pentakisphosphate + ADP + H(+). It catalyses the reaction 1D-myo-inositol 1,3,4-trisphosphate + ATP = 1D-myo-inositol 1,3,4,5-tetrakisphosphate + ADP + H(+). The enzyme catalyses 1D-myo-inositol 1,3,4-trisphosphate + ATP = 1D-myo-inositol 1,3,4,6-tetrakisphosphate + ADP + H(+). The catalysed reaction is 1D-myo-inositol 3,4,6-trisphosphate + ATP = 1D-myo-inositol 1,3,4,6-tetrakisphosphate + ADP + H(+). It carries out the reaction 1D-myo-inositol 1,3,4-trisphosphate + 1D-myo-inositol 1,3,4,5,6-pentakisphosphate = 1D-myo-inositol 3,4,5,6-tetrakisphosphate + 1D-myo-inositol 1,3,4,6-tetrakisphosphate. It catalyses the reaction 1D-myo-inositol 1,3,4-trisphosphate + 1D-myo-inositol 1,3,4,5,6-pentakisphosphate = 1D-myo-inositol 3,4,5,6-tetrakisphosphate + 1D-myo-inositol 1,3,4,5-tetrakisphosphate. Functionally, kinase that can phosphorylate various inositol polyphosphate such as Ins(3,4,5,6)P4 or Ins(1,3,4)P3. Phosphorylates Ins(3,4,5,6)P4 at position 1 to form Ins(1,3,4,5,6)P5. This reaction is thought to have regulatory importance, since Ins(3,4,5,6)P4 is an inhibitor of plasma membrane Ca(2+)-activated Cl(-) channels, while Ins(1,3,4,5,6)P5 is not. Also phosphorylates Ins(1,3,4)P3 on O-5 and O-6 to form Ins(1,3,4,6)P4, an essential molecule in the hexakisphosphate (InsP6) pathway. Also acts as an inositol polyphosphate phosphatase that dephosphorylates Ins(1,3,4,5)P4 and Ins(1,3,4,6)P4 to Ins(1,3,4)P3, and Ins(1,3,4,5,6)P5 to Ins(3,4,5,6)P4. May also act as an isomerase that interconverts the inositol tetrakisphosphate isomers Ins(1,3,4,5)P4 and Ins(1,3,4,6)P4 in the presence of ADP and magnesium. Probably acts as the rate-limiting enzyme of the InsP6 pathway. Modifies TNF-alpha-induced apoptosis by interfering with the activation of TNFRSF1A-associated death domain. Plays an important role in MLKL-mediated necroptosis. Produces highly phosphorylated inositol phosphates such as inositolhexakisphosphate (InsP6) which bind to MLKL mediating the release of an N-terminal auto-inhibitory region leading to its activation. Essential for activated phospho-MLKL to oligomerize and localize to the cell membrane during necroptosis. In Xenopus laevis (African clawed frog), this protein is Inositol-tetrakisphosphate 1-kinase (itpk1).